A 180-amino-acid polypeptide reads, in one-letter code: Insulin-like growth factor 2 (180 aa).

The signal sequence occupies residues 1-24 (MGIPVGKSMLVLLISLAFALCCIA). Residues 25–52 (AYRPSETLCGGELVDTLQFVCSDRGFYF) form a b region. 3 disulfides stabilise this stretch: Cys-33-Cys-71, Cys-45-Cys-84, and Cys-70-Cys-75. Residues 53-64 (SRPSSRANRRSR) form a c region. Residues 65–85 (GIVEECCFRSCDLALLETYCA) form an a region. The interval 86 to 91 (TPAKSE) is d. A propeptide spans 92-180 (RDVSTSQAVL…ASSEMSSNHQ (89 aa)) (e peptide). Residues 160 to 180 (VLPPKDPAHGGASSEMSSNHQ) are disordered.

It belongs to the insulin family. As to quaternary structure, interacts with MYORG; this interaction is required for IGF2 secretion. Interacts with integrins ITGAV:ITGB3 and ITGA6:ITGB4; integrin-binding is required for IGF2 signaling. Interacts with IGFBP2. Proteolytically processed by PCSK4, proIGF2 is cleaved at Arg-128 and Arg-92 to generate big-IGF2 and mature IGF2.

Its subcellular location is the secreted. In terms of biological role, the insulin-like growth factors possess growth-promoting activity. Major fetal growth hormone in mammals. Plays a key role in regulating fetoplacental development. IGF2 is influenced by placental lactogen. Also involved in tissue differentiation. In adults, involved in glucose metabolism in adipose tissue, skeletal muscle and liver. Acts as a ligand for integrin which is required for IGF2 signaling. Positively regulates myogenic transcription factor MYOD1 function by facilitating the recruitment of transcriptional coactivators, thereby controlling muscle terminal differentiation. Inhibits myoblast differentiation and modulates metabolism via increasing the mitochondrial respiration rate. Preptin undergoes glucose-mediated co-secretion with insulin, and acts as a physiological amplifier of glucose-mediated insulin secretion. Exhibits osteogenic properties by increasing osteoblast mitogenic activity through phosphoactivation of MAPK1 and MAPK3. This is Insulin-like growth factor 2 from Rattus norvegicus (Rat).